Consider the following 208-residue polypeptide: FMN-dependent NADH:quinone oxidoreductase 1 (208 aa).

17–19 is an FMN binding site; sequence SVS.

This sequence belongs to the azoreductase type 1 family. As to quaternary structure, homodimer. FMN serves as cofactor.

It catalyses the reaction 2 a quinone + NADH + H(+) = 2 a 1,4-benzosemiquinone + NAD(+). The enzyme catalyses N,N-dimethyl-1,4-phenylenediamine + anthranilate + 2 NAD(+) = 2-(4-dimethylaminophenyl)diazenylbenzoate + 2 NADH + 2 H(+). Functionally, quinone reductase that provides resistance to thiol-specific stress caused by electrophilic quinones. Its function is as follows. Also exhibits azoreductase activity. Catalyzes the reductive cleavage of the azo bond in aromatic azo compounds to the corresponding amines. The polypeptide is FMN-dependent NADH:quinone oxidoreductase 1 (Listeria innocua serovar 6a (strain ATCC BAA-680 / CLIP 11262)).